We begin with the raw amino-acid sequence, 50 residues long: Light-harvesting protein B-880 alpha chain (50 aa).

The Cytoplasmic portion of the chain corresponds to 1–12; sequence MYKLWLLFDPRR. The chain crosses the membrane as a helical span at residues 13–33; it reads ALVALSAFLFVLALIIHFIAL. Position 29 (His-29) interacts with a bacteriochlorophyll. The Periplasmic portion of the chain corresponds to 34–50; sequence STDRFNWLEGKPAVKAA.

The protein belongs to the antenna complex alpha subunit family. The core complex is formed by different alpha and beta chains, binding bacteriochlorophyll molecules, and arranged most probably in tetrameric structures disposed around the reaction center. The non-pigmented gamma chains may constitute additional components.

Its subcellular location is the cell inner membrane. In terms of biological role, antenna complexes are light-harvesting systems, which transfer the excitation energy to the reaction centers. The protein is Light-harvesting protein B-880 alpha chain of Rhodoblastus acidophilus (Rhodopseudomonas acidophila).